A 149-amino-acid chain; its full sequence is MERSLIILKPDAVQRGLIGPILTRIEQRGLRIVGLKLMQIDEALARRHYAIHEGKPFFDSLIAYITSGPVVVLVVTGANVIEMVRSMVGATNPGKAAPGTIRGDFALEIGRNLIHASDSPENGEMEVNLFFRAEELVDMRRSTDQWIYE.

6 residues coordinate ATP: Lys-9, Phe-57, Arg-85, Thr-91, Arg-102, and Asn-112. The active-site Pros-phosphohistidine intermediate is His-115.

The protein belongs to the NDK family. Homotetramer. Mg(2+) is required as a cofactor.

It is found in the cytoplasm. The enzyme catalyses a 2'-deoxyribonucleoside 5'-diphosphate + ATP = a 2'-deoxyribonucleoside 5'-triphosphate + ADP. It carries out the reaction a ribonucleoside 5'-diphosphate + ATP = a ribonucleoside 5'-triphosphate + ADP. Major role in the synthesis of nucleoside triphosphates other than ATP. The ATP gamma phosphate is transferred to the NDP beta phosphate via a ping-pong mechanism, using a phosphorylated active-site intermediate. This Roseiflexus castenholzii (strain DSM 13941 / HLO8) protein is Nucleoside diphosphate kinase.